A 2211-amino-acid chain; its full sequence is Nonribosomal peptide synthetase 13 (2211 aa).

Positions 76-475 (TYAELDSLSD…IEHHLQLTLP (400 aa)) are adenylation 1. In terms of domain architecture, Carrier 1 spans 594–671 (PPSTPKEATI…EQSKRAGLIQ (78 aa)). Position 631 is an O-(pantetheine 4'-phosphoryl)serine (Ser-631). The segment at 710–975 (EDIYPCTALQ…IATVPTRIRV (266 aa)) is condensation 1. An adenylation 2 region spans residues 1169 to 1563 (TYRELWAHSS…LGAVEASVMR (395 aa)). Residues 1677–1756 (PMSDDNERRL…RSRHLITEQA (80 aa)) enclose the Carrier 2 domain. Residue Ser-1714 is modified to O-(pantetheine 4'-phosphoryl)serine. Residues 1814 to 2069 (HFQFDLSGAV…CTNYIPYRLS (256 aa)) form a condensation 2 region.

Belongs to the NRP synthetase family.

The enzyme catalyses L-proline + L-tryptophan + 2 ATP = brevianamide F + 2 AMP + 2 diphosphate + 2 H(+). It participates in mycotoxin biosynthesis. Functionally, nonribosomal peptide synthetase; part of the gene cluster that mediates the biosynthesis of fumitremorgins, indole alkaloids that carry not only intriguing chemical structures, but also interesting biological and pharmacological activities. The biosynthesis of fumitremorgin-type alkaloids begins by condensation of the two amino acids L-tryptophan and L-proline to brevianamide F, catalyzed by the non-ribosomal peptide synthetase ftmA. Brevianamide F is then prenylated by the prenyltransferase ftmPT1/ftmB in the presence of dimethylallyl diphosphate, resulting in the formation of tryprostatin B. The three cytochrome P450 monooxygenases, ftmP450-1/ftmC, ftmP450-2/ftmE and ftmP450-3/FtmG, are responsible for the conversion of tryprostatin B to 6-hydroxytryprostatin B, tryprostatin A to fumitremorgin C and fumitremorgin C to 12,13-dihydroxyfumitremorgin C, respectively. The putative methyltransferase ftmMT/ftmD is expected for the conversion of 6-hydroxytryprostatin B to tryprostatin A. FtmPT2/FtmH catalyzes the prenylation of 12,13-dihydroxyfumitre-morgin C in the presence of dimethylallyl diphosphate, resulting in the formation of fumitremorgin B. Fumitremorgin B is further converted to verruculogen by ftmOx1/ftmF via the insertion of an endoperoxide bond between the two prenyl moieties. In some fungal species, verruculogen is further converted to fumitremorgin A, but the enzymes involved in this step have not been identified yet. The chain is Nonribosomal peptide synthetase 13 from Aspergillus fumigatus (Neosartorya fumigata).